A 211-amino-acid chain; its full sequence is uncharacterized protein (211 aa).

Composition is skewed to low complexity over residues Met1 to Asp19 and Ser61 to Ala74. 2 disordered regions span residues Met1–Ser27 and Ala54–Arg94.

In terms of assembly, interacts with RLK902. In terms of tissue distribution, expressed in inflorescences, stems, rosette leaves and weakly in roots.

This is an uncharacterized protein from Arabidopsis thaliana (Mouse-ear cress).